Reading from the N-terminus, the 1560-residue chain is BRD4-interacting chromatin-remodeling complex-associated protein (1560 aa).

Disordered stretches follow at residues 53 to 99 (VQEA…GADQ), 624 to 688 (APQA…ATPT), 723 to 949 (IVSA…VTTP), 974 to 1028 (NKAG…TGLP), 1049 to 1075 (KAAS…KPPT), and 1215 to 1300 (SSEG…IKTY). Positions 86–96 (ATGGGGGGSGG) are enriched in gly residues. Residues 624-664 (APQAPPAVSTPLPLGLQQPQAQQPPQAPTPQAAAPPQATTP) show a composition bias toward low complexity. Residues 726-736 (APPPAQDPAPA) are compositionally biased toward pro residues. Positions 747–780 (PQAPDSQASPAPAPQIPAAAPLKGPGPSSSPSLP) are enriched in low complexity. 3 stretches are compositionally biased toward pro residues: residues 791–806 (LPSP…PPSR), 814–831 (PSEP…PPTL), and 843–880 (VPPP…PHLP). Positions 881-896 (PSSTSSAVASSSETSS) are enriched in low complexity. A Phosphoserine modification is found at serine 919. Threonine 921 carries the phosphothreonine modification. The span at 932–941 (PAAPPPPPPR) shows a compositional bias: pro residues. Low complexity predominate over residues 1005–1028 (APSGTPTAPSHAPAPAPMAATGLP). Lysine 1057 bears the N6-acetyllysine mark. A compositionally biased stretch (polar residues) spans 1227 to 1236 (LSSSAPGAST). Residues 1264–1281 (ASSSLSSSSSSSSAASSL) show a composition bias toward low complexity. A Glycyl lysine isopeptide (Lys-Gly) (interchain with G-Cter in SUMO2) cross-link involves residue lysine 1313. 2 disordered regions span residues 1324 to 1424 (NTAL…VDEA) and 1440 to 1560 (YQRM…TLTR). The segment covering 1331–1356 (HQPPPPPATLKVAEPPPRPPPPPPPT) has biased composition (pro residues). Over residues 1401–1412 (PEGTPAGRARGG) the composition is skewed to low complexity. Serine 1413 carries the phosphoserine modification. Residues 1485–1515 (ASFSSDSPQDDTLTEHLQSAIDSILNLQQAP) show a composition bias toward polar residues.

Component of the multiprotein chromatin-remodeling complexes SWI/SNF: SWI/SNF-A (BAF), SWI/SNF-B (PBAF) and related complexes. The canonical complex contains a catalytic subunit (either SMARCA4/BRG1/BAF190A or SMARCA2/BRM/BAF190B) and at least SMARCE1, ACTL6A/BAF53, SMARCC1/BAF155, SMARCC2/BAF170, and SMARCB1/SNF5/BAF47. Other subunits specific to each of the complexes may also be present permitting several possible combinations developmentally and tissue specific. Component of the SWI/SNF (GBAF) subcomplex, which includes at least BICRA or BICRAL (mutually exclusive), BRD9, SS18, the core BAF subunits, SMARCA2/BRM, SMARCA4/BRG1/BAF190A, ACTL6A/BAF53, SMARCC1/BAF155, and SMARCD1/BAF60A. Interacts with BRD4; the interaction bridges BRD4 to the GBAF complex. Expressed at moderate levels in heart, brain, placenta, skeletal muscle, and pancreas, and at lower levels in lung, liver and kidney.

The protein resides in the nucleus. Functionally, component of SWI/SNF chromatin remodeling subcomplex GBAF that carries out key enzymatic activities, changing chromatin structure by altering DNA-histone contacts within a nucleosome in an ATP-dependent manner. May play a role in BRD4-mediated gene transcription. In Homo sapiens (Human), this protein is BRD4-interacting chromatin-remodeling complex-associated protein.